The sequence spans 54 residues: Ovomucoid (54 aa).

The region spanning 4–54 is the Kazal-like domain; the sequence is VDCSGYPTHACTLELKPLCGSDNQTYSNKCGFCNAVAQSNGTLTLSHFGKC. Intrachain disulfides connect Cys6–Cys36, Cys14–Cys33, and Cys22–Cys54. Asn43 carries an N-linked (GlcNAc...) asparagine glycan.

The protein localises to the secreted. The chain is Ovomucoid from Leipoa ocellata (Malleefowl).